The primary structure comprises 402 residues: 1-deoxy-D-xylulose 5-phosphate reductoisomerase (402 aa).

Residues T13, G14, S15, I16, and N126 each contribute to the NADPH site. K127 provides a ligand contact to 1-deoxy-D-xylulose 5-phosphate. E128 is a binding site for NADPH. D152 is a Mn(2+) binding site. The 1-deoxy-D-xylulose 5-phosphate site is built by S153, E154, S188, and H211. E154 is a binding site for Mn(2+). G217 contributes to the NADPH binding site. 1-deoxy-D-xylulose 5-phosphate-binding residues include S224, N229, K230, and E233. Residue E233 coordinates Mn(2+).

Belongs to the DXR family. Mg(2+) is required as a cofactor. The cofactor is Mn(2+).

It carries out the reaction 2-C-methyl-D-erythritol 4-phosphate + NADP(+) = 1-deoxy-D-xylulose 5-phosphate + NADPH + H(+). Its pathway is isoprenoid biosynthesis; isopentenyl diphosphate biosynthesis via DXP pathway; isopentenyl diphosphate from 1-deoxy-D-xylulose 5-phosphate: step 1/6. Catalyzes the NADPH-dependent rearrangement and reduction of 1-deoxy-D-xylulose-5-phosphate (DXP) to 2-C-methyl-D-erythritol 4-phosphate (MEP). The protein is 1-deoxy-D-xylulose 5-phosphate reductoisomerase of Psychrobacter arcticus (strain DSM 17307 / VKM B-2377 / 273-4).